The chain runs to 485 residues: Glutamyl-tRNA(Gln) amidotransferase subunit A (485 aa).

Active-site charge relay system residues include Lys79 and Ser154. Ser178 functions as the Acyl-ester intermediate in the catalytic mechanism.

It belongs to the amidase family. GatA subfamily. As to quaternary structure, heterotrimer of A, B and C subunits.

It carries out the reaction L-glutamyl-tRNA(Gln) + L-glutamine + ATP + H2O = L-glutaminyl-tRNA(Gln) + L-glutamate + ADP + phosphate + H(+). Its function is as follows. Allows the formation of correctly charged Gln-tRNA(Gln) through the transamidation of misacylated Glu-tRNA(Gln) in organisms which lack glutaminyl-tRNA synthetase. The reaction takes place in the presence of glutamine and ATP through an activated gamma-phospho-Glu-tRNA(Gln). The sequence is that of Glutamyl-tRNA(Gln) amidotransferase subunit A from Staphylococcus epidermidis (strain ATCC 12228 / FDA PCI 1200).